We begin with the raw amino-acid sequence, 474 residues long: F420-non-reducing hydrogenase vhc subunit A (474 aa).

Residues Cys-61, Cys-64, Cys-445, and Cys-448 each coordinate Ni(2+).

This sequence belongs to the [NiFe]/[NiFeSe] hydrogenase large subunit family. In terms of assembly, the F420-non-reducing hydrogenase vhc is composed of three subunits; VhcA, VhcD and VhcG. Ni(2+) serves as cofactor.

The chain is F420-non-reducing hydrogenase vhc subunit A (vhcA) from Methanococcus voltae.